The sequence spans 166 residues: Endoribonuclease YbeY (166 aa).

Residues H130, H134, and H140 each coordinate Zn(2+).

It belongs to the endoribonuclease YbeY family. It depends on Zn(2+) as a cofactor.

It localises to the cytoplasm. Its function is as follows. Single strand-specific metallo-endoribonuclease involved in late-stage 70S ribosome quality control and in maturation of the 3' terminus of the 16S rRNA. This chain is Endoribonuclease YbeY, found in Streptococcus uberis (strain ATCC BAA-854 / 0140J).